A 166-amino-acid chain; its full sequence is uncharacterized protein (166 aa).

The segment at 28-55 (SRQVHPPWPVPCKSKLQEQDSSESKESK) is disordered. Over residues 42-55 (KLQEQDSSESKESK) the composition is skewed to basic and acidic residues. Residues 67 to 163 (QNAMLYIENN…NYTPKQFKRT (97 aa)) enclose the HTH araC/xylS-type domain. 2 consecutive DNA-binding regions (H-T-H motif) follow at residues 84 to 105 (DTVAFSVGVSRSYLVKQFKLAT) and 130 to 153 (VTETAYEVGFNNSNYFATVFKKRT).

This is an uncharacterized protein from Pseudoalteromonas carrageenovora (Alteromonas carrageenovora).